The primary structure comprises 230 residues: Flagellar L-ring protein (230 aa).

The signal sequence occupies residues 1-21; sequence MMLKTVLRLPVCAALLALAAG. C22 is lipidated: N-palmitoyl cysteine. C22 carries the S-diacylglycerol cysteine lipid modification. The interval 34 to 53 is disordered; sequence PLTAPPPPPPQPSARPNGSI. Over residues 36–46 the composition is skewed to pro residues; it reads TAPPPPPPQPS.

The protein belongs to the FlgH family. In terms of assembly, the basal body constitutes a major portion of the flagellar organelle and consists of four rings (L,P,S, and M) mounted on a central rod.

It localises to the cell outer membrane. The protein localises to the bacterial flagellum basal body. In terms of biological role, assembles around the rod to form the L-ring and probably protects the motor/basal body from shearing forces during rotation. The chain is Flagellar L-ring protein from Bordetella bronchiseptica (strain ATCC BAA-588 / NCTC 13252 / RB50) (Alcaligenes bronchisepticus).